Consider the following 334-residue polypeptide: Retinol dehydrogenase 13 (334 aa).

The residue at position 2 (S2) is an N-acetylserine. 45–51 (GANTGIG) contributes to the NADP(+) binding site. S174 contacts substrate. The active-site Proton acceptor is Y200.

The protein belongs to the short-chain dehydrogenases/reductases (SDR) family.

It localises to the mitochondrion inner membrane. The enzyme catalyses all-trans-retinol + NADP(+) = all-trans-retinal + NADPH + H(+). It participates in cofactor metabolism; retinol metabolism. Functionally, retinol dehydrogenase with a clear preference for NADP. Oxidizes all-trans-retinol, but seems to reduce all-trans-retinal with much higher efficiency. Has no activity towards steroid. This chain is Retinol dehydrogenase 13 (Rdh13), found in Mus musculus (Mouse).